Here is a 307-residue protein sequence, read N- to C-terminus: MRIVFAGTPEFAVSSLRAAARHHEVVAVYTQPDRPAGRGRGLAPSPVKLEAVARGIPVYQPESLKDAAAQQQLRDLQPDLMVVVAYGLILPKAVLAIPTHGCWNVHASLLPRWRGAAPIQRAIQAGDAKTGVCLMQMEAGLDTGPVLLHQELPIASTDTGGQLHDKLAELGAQVLSDGLGLLRAGIKPIARPQPEQGVTYAHKLDKAEARLDWAQDADALARTVRAFNPWPIAEATLAGERVRIHGAVALEADHGQAPGTVLAAGRDGIDIACGQGALRLRVLQREGGKAITAADYLNARRDLRVGA.

Residue serine 108–proline 111 coordinates (6S)-5,6,7,8-tetrahydrofolate.

It belongs to the Fmt family.

The enzyme catalyses L-methionyl-tRNA(fMet) + (6R)-10-formyltetrahydrofolate = N-formyl-L-methionyl-tRNA(fMet) + (6S)-5,6,7,8-tetrahydrofolate + H(+). In terms of biological role, attaches a formyl group to the free amino group of methionyl-tRNA(fMet). The formyl group appears to play a dual role in the initiator identity of N-formylmethionyl-tRNA by promoting its recognition by IF2 and preventing the misappropriation of this tRNA by the elongation apparatus. The chain is Methionyl-tRNA formyltransferase from Stenotrophomonas maltophilia (strain K279a).